A 908-amino-acid polypeptide reads, in one-letter code: Disease resistance protein RPP8 (908 aa).

A coiled-coil region spans residues 15-57 (DLLSRESERLQGIDGQLDGLKRQLRSLQSLLKDADAKKHGSDR). Positions 146 to 459 (RQRVQREIRQ…AEGIYDGSTI (314 aa)) constitute an NB-ARC domain. 192 to 199 (GMGGIGKT) contributes to the ATP binding site. LRR repeat units follow at residues 575-600 (LTLL…IGGL), 601-623 (IHLR…MRNL), 648-673 (MIQL…DLVN), 693-718 (MTKL…SLRE), 722-746 (LETL…VLDH), 748-770 (IHLK…QFPP), 793-820 (LLHL…GFPQ), 842-867 (MPCL…KYIT), and 882-905 (KEKL…QFIN).

Belongs to the disease resistance NB-LRR family. RPP8/HRT subfamily. In terms of assembly, interacts with the NAC protein TIP. Interacts with MORC1/CRT1. Interacts with COP1 and is subsequently degraded in a 26s proteasome dependent manner. In terms of tissue distribution, mostly expressed in leaves, and, to a lower extent, in roots.

It is found in the cell membrane. Its function is as follows. Disease resistance protein. Resistance proteins guard the plant against pathogens that contain an appropriate avirulence protein via an indirect interaction with this avirulence protein. That triggers a defense system including the hypersensitive response, which restricts the pathogen growth. The interaction with TIP (TCV-interacting protein) may be essential for the recognition of the avirulence proteins, and the triggering of the defense response. Triggers resistance to turnip crinkle virus (TCV) via a SAG101-dependent pathway. The protein is Disease resistance protein RPP8 (RPP8) of Arabidopsis thaliana (Mouse-ear cress).